The primary structure comprises 221 residues: UPF0758 protein Ent638_0101 (221 aa).

One can recognise an MPN domain in the interval 99-221; that stretch reads PLLSPEMTKD…YVSFAEQGWI (123 aa). The Zn(2+) site is built by histidine 170, histidine 172, and aspartate 183. The JAMM motif motif lies at 170–183; that stretch reads HNHPSGCAEPSKAD.

It belongs to the UPF0758 family. YicR subfamily.

This Enterobacter sp. (strain 638) protein is UPF0758 protein Ent638_0101.